We begin with the raw amino-acid sequence, 415 residues long: Serine hydroxymethyltransferase (415 aa).

Residues leucine 121 and 125-127 (GHL) each bind (6S)-5,6,7,8-tetrahydrofolate. Lysine 230 is subject to N6-(pyridoxal phosphate)lysine. 355–357 (SPF) is a binding site for (6S)-5,6,7,8-tetrahydrofolate.

This sequence belongs to the SHMT family. Homodimer. Pyridoxal 5'-phosphate is required as a cofactor.

It is found in the cytoplasm. The catalysed reaction is (6R)-5,10-methylene-5,6,7,8-tetrahydrofolate + glycine + H2O = (6S)-5,6,7,8-tetrahydrofolate + L-serine. It functions in the pathway one-carbon metabolism; tetrahydrofolate interconversion. It participates in amino-acid biosynthesis; glycine biosynthesis; glycine from L-serine: step 1/1. Functionally, catalyzes the reversible interconversion of serine and glycine with tetrahydrofolate (THF) serving as the one-carbon carrier. This reaction serves as the major source of one-carbon groups required for the biosynthesis of purines, thymidylate, methionine, and other important biomolecules. Also exhibits THF-independent aldolase activity toward beta-hydroxyamino acids, producing glycine and aldehydes, via a retro-aldol mechanism. This chain is Serine hydroxymethyltransferase, found in Lactococcus lactis subsp. cremoris (strain MG1363).